A 251-amino-acid polypeptide reads, in one-letter code: Sec-independent protein translocase protein TatC (251 aa).

6 consecutive transmembrane segments (helical) span residues 23 to 43, 73 to 93, 104 to 124, 159 to 179, 197 to 217, and 218 to 238; these read AFII…SFLL, SAFT…YLFI, IIAF…IFVF, LVIH…VIIV, IAVV…ILSQ, and FALA…CNFI.

It belongs to the TatC family. As to quaternary structure, the Tat system comprises two distinct complexes: a TatABC complex, containing multiple copies of TatA, TatB and TatC subunits, and a separate TatA complex, containing only TatA subunits. Substrates initially bind to the TatABC complex, which probably triggers association of the separate TatA complex to form the active translocon.

It localises to the cell inner membrane. Part of the twin-arginine translocation (Tat) system that transports large folded proteins containing a characteristic twin-arginine motif in their signal peptide across membranes. Together with TatB, TatC is part of a receptor directly interacting with Tat signal peptides. The sequence is that of Sec-independent protein translocase protein TatC from Rickettsia prowazekii (strain Madrid E).